We begin with the raw amino-acid sequence, 162 residues long: MSKKNSKNKAGSSTIALNRTARHEYFIEERVEAGLSLQGWEVKSLRAGKANISEAYVIFMQGEAFLFGSTFLPLNAASSHVVCDPTRTRKLLLSRHELDKLESLTARQGYTIVPLALYWKECWVKVEIGLVKGKKEHDKREDTKAREWDREKARIMKNKHRG.

A compositionally biased stretch (basic and acidic residues) spans 137 to 154; that stretch reads HDKREDTKAREWDREKAR. The disordered stretch occupies residues 137 to 162; the sequence is HDKREDTKAREWDREKARIMKNKHRG.

Belongs to the SmpB family.

Its subcellular location is the cytoplasm. Its function is as follows. Required for rescue of stalled ribosomes mediated by trans-translation. Binds to transfer-messenger RNA (tmRNA), required for stable association of tmRNA with ribosomes. tmRNA and SmpB together mimic tRNA shape, replacing the anticodon stem-loop with SmpB. tmRNA is encoded by the ssrA gene; the 2 termini fold to resemble tRNA(Ala) and it encodes a 'tag peptide', a short internal open reading frame. During trans-translation Ala-aminoacylated tmRNA acts like a tRNA, entering the A-site of stalled ribosomes, displacing the stalled mRNA. The ribosome then switches to translate the ORF on the tmRNA; the nascent peptide is terminated with the 'tag peptide' encoded by the tmRNA and targeted for degradation. The ribosome is freed to recommence translation, which seems to be the essential function of trans-translation. The chain is SsrA-binding protein from Aeromonas salmonicida (strain A449).